Reading from the N-terminus, the 237-residue chain is Protein CUSTOS (237 aa).

Disordered regions lie at residues 1-23 (MAAPRRGTQKSDSDSSDEDLDRF), 50-69 (LRVRPDCHEHDGNELQTTPE), and 97-237 (ISKA…LGNE). Positions 52 to 62 (VRPDCHEHDGN) are enriched in basic and acidic residues. Residues 162 to 177 (STLQQEPQSTPSNVCD) are compositionally biased toward polar residues. Positions 181-190 (PKKKRKKKKK) are enriched in basic residues. A Nucleolar localization signal (NLS1) motif is present at residues 182–190 (KKKRKKKKK). Composition is skewed to basic and acidic residues over residues 203–216 (ETMHIEPGKNELQA) and 225–237 (KLEMAHCDELGNE). Residues 217–225 (KRKKKKKQK) carry the Nucleolar localization signal (NLS2) motif.

This sequence belongs to the CUSTOS family. In terms of assembly, interacts (via NLS1 and NLS2) with dvl2; the interaction is negatively regulated by Wnt stimulation. Interacts with csnk1a1. Interacts with ctnnb1; the interaction is positively regulated by Wnt stimulation. Post-translationally, phosphorylated by ck1/csnk1a1.

The protein resides in the nucleus envelope. Essential for Spemann-Mangold organizer formation and subsequent anterior head development in the embryo. Inhibits canonical Wnt signaling pathway by antagonizing nuclear import of beta-catenin (ctnnb1) during embryogenesis. The protein is Protein CUSTOS of Xenopus laevis (African clawed frog).